The sequence spans 463 residues: tRNA-2-methylthio-N(6)-dimethylallyladenosine synthase (463 aa).

Residues Arg-18 to Gln-136 enclose the MTTase N-terminal domain. Residues Cys-27, Cys-63, Cys-100, Cys-174, Cys-178, and Cys-181 each coordinate [4Fe-4S] cluster. The Radical SAM core domain maps to Gly-160–Glu-392. The TRAM domain occupies Lys-395–Glu-458.

This sequence belongs to the methylthiotransferase family. MiaB subfamily. In terms of assembly, monomer. It depends on [4Fe-4S] cluster as a cofactor.

It localises to the cytoplasm. The enzyme catalyses N(6)-dimethylallyladenosine(37) in tRNA + (sulfur carrier)-SH + AH2 + 2 S-adenosyl-L-methionine = 2-methylsulfanyl-N(6)-dimethylallyladenosine(37) in tRNA + (sulfur carrier)-H + 5'-deoxyadenosine + L-methionine + A + S-adenosyl-L-homocysteine + 2 H(+). Catalyzes the methylthiolation of N6-(dimethylallyl)adenosine (i(6)A), leading to the formation of 2-methylthio-N6-(dimethylallyl)adenosine (ms(2)i(6)A) at position 37 in tRNAs that read codons beginning with uridine. The chain is tRNA-2-methylthio-N(6)-dimethylallyladenosine synthase from Porphyromonas gingivalis (strain ATCC BAA-308 / W83).